The following is a 413-amino-acid chain: Multifunctional CCA protein (413 aa).

ATP contacts are provided by Gly-8 and Arg-11. Residues Gly-8 and Arg-11 each coordinate CTP. The Mg(2+) site is built by Asp-21 and Asp-23. Arg-91, Arg-143, and Arg-146 together coordinate ATP. The CTP site is built by Arg-91, Arg-143, and Arg-146. One can recognise an HD domain in the interval Thr-232–Leu-333.

It belongs to the tRNA nucleotidyltransferase/poly(A) polymerase family. Bacterial CCA-adding enzyme type 1 subfamily. Monomer. Can also form homodimers and oligomers. Mg(2+) serves as cofactor. Ni(2+) is required as a cofactor.

It catalyses the reaction a tRNA precursor + 2 CTP + ATP = a tRNA with a 3' CCA end + 3 diphosphate. It carries out the reaction a tRNA with a 3' CCA end + 2 CTP + ATP = a tRNA with a 3' CCACCA end + 3 diphosphate. Its function is as follows. Catalyzes the addition and repair of the essential 3'-terminal CCA sequence in tRNAs without using a nucleic acid template. Adds these three nucleotides in the order of C, C, and A to the tRNA nucleotide-73, using CTP and ATP as substrates and producing inorganic pyrophosphate. tRNA 3'-terminal CCA addition is required both for tRNA processing and repair. Also involved in tRNA surveillance by mediating tandem CCA addition to generate a CCACCA at the 3' terminus of unstable tRNAs. While stable tRNAs receive only 3'-terminal CCA, unstable tRNAs are marked with CCACCA and rapidly degraded. This is Multifunctional CCA protein from Burkholderia orbicola (strain MC0-3).